The sequence spans 676 residues: Electrogenic aspartate/glutamate antiporter SLC25A13, mitochondrial (676 aa).

Position 2 is an N-acetylalanine (Ala2). Positions 2-295 are regulatory N-terminal domain; sequence AAAKVALTKR…TLADIERIAP (294 aa). The Mitochondrial intermembrane portion of the chain corresponds to 2–332; sequence AAAKVALTKR…LLQLAESAYR (331 aa). Lys18 carries the N6-acetyllysine modification. EF-hand domains lie at 51–86, 87–122, 123–157, and 158–193; these read SQPNPKTVELLSGVVDQTKDGLISFQEFVAFESVLC, APDALFMVAFQLFDKAGKGEVTFEDVKQIFGQTTIH, QHIPFNWDSEFVQLHFGKERKRHLTYAEFTQFLLE, and IQLEHAKQAFVQRDNAKTGKVSAIDFRDIMVTIRPH. Ca(2+) contacts are provided by Asp66, Thr68, Asp70, Leu72, and Glu77. The segment at 296-311 is linker loop domain; it reads LEEGMLPFNLAEAQRQ. The segment at 322-613 is carrier domain; the sequence is FLLQLAESAY…LQRWFYVDFG (292 aa). Solcar repeat units follow at residues 327–419, 427–511, and 519–607; these read AESA…VRDK, VPLL…VKAS, and VSPG…LQRW. A helical transmembrane segment spans residues 333–350; the sequence is FGLGSIAGAVGATAVYPI. The Mitochondrial matrix portion of the chain corresponds to 351-393; sequence DLVKTRMQNQRSTGSFVGELMYKNSFDCFKKVLRYEGFFGLYR. An N6-acetyllysine mark is found at Lys354 and Lys373. A helical transmembrane segment spans residues 394 to 413; the sequence is GLLPQLLGVAPEKAIKLTVN. Topologically, residues 414–436 are mitochondrial intermembrane; that stretch reads DFVRDKFMHKDGSVPLLAEIFAG. Residues 437 to 450 form a helical membrane-spanning segment; that stretch reads GCAGGSQVIFTNPL. Residues 451–485 lie on the Mitochondrial matrix side of the membrane; the sequence is EIVKIRLQVAGEITTGPRVSALSVVRDLGFFGIYK. The residue at position 454 (Lys454) is an N6-methyllysine. Lys485 carries the N6-acetyllysine; alternate modification. Residue Lys485 is modified to N6-succinyllysine; alternate. Residues 486–505 form a helical membrane-spanning segment; sequence GAKACFLRDIPFSAIYFPCY. At 506 to 524 the chain is on the mitochondrial intermembrane side; it reads AHVKASFANEDGQVSPGSL. A helical membrane pass occupies residues 525 to 542; sequence LLAGAIAGMPAASLVTPA. At 543–581 the chain is on the mitochondrial matrix side; it reads DVIKTRLQVAARAGQTTYNGVTDCFRKILREEGPKALWK. Lys581 carries the post-translational modification N6-succinyllysine. A helical transmembrane segment spans residues 582–601; that stretch reads GVAARVFRSSPQFGVTLLTY. Topologically, residues 602 to 676 are mitochondrial intermembrane; that stretch reads ELLQRWFYVD…STSKVTAGDS (75 aa). The interval 614–676 is C-terminal domain; sequence GVKPVGSEPV…STSKVTAGDS (63 aa). Lys663 bears the N6-acetyllysine mark. Position 667 is a phosphoserine (Ser667).

The protein belongs to the mitochondrial carrier (TC 2.A.29) family. As to quaternary structure, homodimer (via N-terminus). As to expression, at 10.5 dpc, expressed in branchial arches, a well as in the limb and tail buds. At 13.5 dpc expression is predominant in epithelial structures and the forebrain, kidney and liver. Expression in liver is maintained into adulthood.

Its subcellular location is the mitochondrion inner membrane. It catalyses the reaction L-aspartate(in) + L-glutamate(out) + H(+)(out) = L-aspartate(out) + L-glutamate(in) + H(+)(in). The catalysed reaction is 3-sulfino-L-alanine(out) + L-glutamate(in) + H(+)(in) = 3-sulfino-L-alanine(in) + L-glutamate(out) + H(+)(out). It carries out the reaction 3-sulfino-L-alanine(out) + L-aspartate(in) = 3-sulfino-L-alanine(in) + L-aspartate(out). Its function is as follows. Mitochondrial electrogenic aspartate/glutamate antiporter that favors efflux of aspartate and entry of glutamate and proton within the mitochondria as part of the malate-aspartate shuttle. Also mediates the uptake of L-cysteinesulfinate (3-sulfino-L-alanine) by mitochondria in exchange of L-glutamate and proton. Can also exchange L-cysteinesulfinate with aspartate in their anionic form without any proton translocation. Lacks transport activity towards gamma-aminobutyric acid (GABA). In Mus musculus (Mouse), this protein is Electrogenic aspartate/glutamate antiporter SLC25A13, mitochondrial.